Reading from the N-terminus, the 236-residue chain is Probable pseudouridine-5'-phosphatase YKL033W-A (236 aa).

Belongs to the HAD-like hydrolase superfamily.

The catalysed reaction is XMP + H2O = xanthosine + phosphate. The enzyme catalyses psi-UMP + H2O = pseudouridine + phosphate. Its function is as follows. Nucleotidase with XMP as the best in vitro substrate. Low catalytic efficiencies of YKL033W-A observed with XMP and other substrates suggest that these could be secondary activities for this protein, and its primary substrate is not yet identified. May possess pseudouridine 5'-phosphatase activity and together with dTTP/UTP pyrophosphatase YOR111W might constitute a pathway for the detoxification of pseudouridine 5'-triphosphate (Psi-UTP) and -monophosphate (Psi-UMP). This is Probable pseudouridine-5'-phosphatase YKL033W-A from Saccharomyces cerevisiae (strain ATCC 204508 / S288c) (Baker's yeast).